The chain runs to 329 residues: Beta-1,3-galactosyltransferase 6 (329 aa).

The Cytoplasmic portion of the chain corresponds to Met1–Arg11. The helical; Signal-anchor for type II membrane protein transmembrane segment at Ala12 to Ala34 threads the bilayer. The Lumenal portion of the chain corresponds to Glu35–Pro329. Asn131 carries N-linked (GlcNAc...) asparagine glycosylation.

It belongs to the glycosyltransferase 31 family. Mn(2+) serves as cofactor. In terms of tissue distribution, ubiquitous.

Its subcellular location is the golgi apparatus. The protein resides in the golgi stack membrane. It catalyses the reaction 3-O-(beta-D-galactosyl-(1-&gt;4)-beta-D-xylosyl)-L-seryl-[protein] + UDP-alpha-D-galactose = 3-O-(beta-D-galactosyl-(1-&gt;3)-beta-D-galactosyl-(1-&gt;4)-beta-D-xylosyl)-L-seryl-[protein] + UDP + H(+). It functions in the pathway glycan metabolism; chondroitin sulfate biosynthesis. Its pathway is glycan metabolism; heparan sulfate biosynthesis. Its function is as follows. Beta-1,3-galactosyltransferase that transfers galactose from UDP-galactose to substrates with a terminal beta-linked galactose residue. Has a preference for galactose-beta-1,4-xylose that is found in the linker region of glycosaminoglycans, such as heparan sulfate and chondroitin sulfate. Has no activity towards substrates with terminal glucosamine or galactosamine residues. This Homo sapiens (Human) protein is Beta-1,3-galactosyltransferase 6 (B3GALT6).